The sequence spans 374 residues: Peptide chain release factor 2 (374 aa).

Gln252 is subject to N5-methylglutamine.

This sequence belongs to the prokaryotic/mitochondrial release factor family. In terms of processing, methylated by PrmC. Methylation increases the termination efficiency of RF2.

The protein resides in the cytoplasm. Functionally, peptide chain release factor 2 directs the termination of translation in response to the peptide chain termination codons UGA and UAA. This is Peptide chain release factor 2 from Stenotrophomonas maltophilia (strain R551-3).